Reading from the N-terminus, the 705-residue chain is Elongation factor G (705 aa).

The region spanning 8-294 (NLYRNFGIMA…AVIDYLPSPL (287 aa)) is the tr-type G domain. GTP contacts are provided by residues 17–24 (AHIDAGKT), 92–96 (DTPGH), and 146–149 (NKMD).

This sequence belongs to the TRAFAC class translation factor GTPase superfamily. Classic translation factor GTPase family. EF-G/EF-2 subfamily.

Its subcellular location is the cytoplasm. Functionally, catalyzes the GTP-dependent ribosomal translocation step during translation elongation. During this step, the ribosome changes from the pre-translocational (PRE) to the post-translocational (POST) state as the newly formed A-site-bound peptidyl-tRNA and P-site-bound deacylated tRNA move to the P and E sites, respectively. Catalyzes the coordinated movement of the two tRNA molecules, the mRNA and conformational changes in the ribosome. This Ruegeria pomeroyi (strain ATCC 700808 / DSM 15171 / DSS-3) (Silicibacter pomeroyi) protein is Elongation factor G.